A 256-amino-acid chain; its full sequence is Ubiquinone/menaquinone biosynthesis C-methyltransferase UbiE (256 aa).

Residues threonine 79, aspartate 100, and 128-129 each bind S-adenosyl-L-methionine; that span reads DA.

The protein belongs to the class I-like SAM-binding methyltransferase superfamily. MenG/UbiE family.

It catalyses the reaction a 2-demethylmenaquinol + S-adenosyl-L-methionine = a menaquinol + S-adenosyl-L-homocysteine + H(+). The enzyme catalyses a 2-methoxy-6-(all-trans-polyprenyl)benzene-1,4-diol + S-adenosyl-L-methionine = a 5-methoxy-2-methyl-3-(all-trans-polyprenyl)benzene-1,4-diol + S-adenosyl-L-homocysteine + H(+). The protein operates within quinol/quinone metabolism; menaquinone biosynthesis; menaquinol from 1,4-dihydroxy-2-naphthoate: step 2/2. It functions in the pathway cofactor biosynthesis; ubiquinone biosynthesis. Functionally, methyltransferase required for the conversion of demethylmenaquinol (DMKH2) to menaquinol (MKH2) and the conversion of 2-polyprenyl-6-methoxy-1,4-benzoquinol (DDMQH2) to 2-polyprenyl-3-methyl-6-methoxy-1,4-benzoquinol (DMQH2). This chain is Ubiquinone/menaquinone biosynthesis C-methyltransferase UbiE, found in Pseudomonas savastanoi pv. phaseolicola (strain 1448A / Race 6) (Pseudomonas syringae pv. phaseolicola (strain 1448A / Race 6)).